The primary structure comprises 374 residues: UPF0496 protein At4g34320 (374 aa).

The next 2 membrane-spanning stretches (helical) occupy residues Ile-215–Ala-235 and Pro-238–Ile-258.

Belongs to the UPF0496 family.

It is found in the membrane. The chain is UPF0496 protein At4g34320 from Arabidopsis thaliana (Mouse-ear cress).